The primary structure comprises 205 residues: ATP phosphoribosyltransferase (205 aa).

This sequence belongs to the ATP phosphoribosyltransferase family. Short subfamily. As to quaternary structure, heteromultimer composed of HisG and HisZ subunits.

The protein localises to the cytoplasm. It catalyses the reaction 1-(5-phospho-beta-D-ribosyl)-ATP + diphosphate = 5-phospho-alpha-D-ribose 1-diphosphate + ATP. It participates in amino-acid biosynthesis; L-histidine biosynthesis; L-histidine from 5-phospho-alpha-D-ribose 1-diphosphate: step 1/9. Functionally, catalyzes the condensation of ATP and 5-phosphoribose 1-diphosphate to form N'-(5'-phosphoribosyl)-ATP (PR-ATP). Has a crucial role in the pathway because the rate of histidine biosynthesis seems to be controlled primarily by regulation of HisG enzymatic activity. The chain is ATP phosphoribosyltransferase from Helicobacter hepaticus (strain ATCC 51449 / 3B1).